We begin with the raw amino-acid sequence, 401 residues long: Voltage-gated potassium channel subunit beta-1 (401 aa).

Residues Thr90, Trp91, Gln97, and Asp119 each coordinate NADP(+). Tyr124 functions as the Proton donor/acceptor in the catalytic mechanism. Residues Asn192, Ser222, Arg223, Gln248, Trp277, Ser278, Pro279, Leu280, Ala281, Cys282, Lys288, Arg298, Gly357, Ser359, Gln363, Glu366, and Asn367 each contribute to the NADP(+) site.

This sequence belongs to the shaker potassium channel beta subunit family. In terms of assembly, homotetramer. Interaction with tetrameric potassium channel alpha subunits gives rise to a heterooctamer. Identified in potassium channel complexes containing KCNA1, KCNA2, KCNA4, KCNA5, KCNA6, KCNAB1 and KCNAB2. Part of a complex containing KCNA1, KCNA4 and LGI1; interaction with LGI1 inhibits down-regulation of KCNA1 channel activity. Interacts with the dimer formed by GNB1 and GNG2; this enhances KCNA1 binding. Interacts with SQSTM1.

The protein resides in the cytoplasm. It is found in the membrane. Its subcellular location is the cell membrane. The enzyme catalyses a primary alcohol + NADP(+) = an aldehyde + NADPH + H(+). It catalyses the reaction a secondary alcohol + NADP(+) = a ketone + NADPH + H(+). Functionally, regulatory subunit of the voltage-gated potassium (Kv) channels composed of pore-forming and potassium-conducting alpha subunits and of regulatory beta subunits. The beta-1/KCNAB1 cytoplasmic subunit mediates closure of delayed rectifier potassium channels by physically obstructing the pore via its N-terminal domain and increases the speed of channel closure for other family members. Promotes the inactivation of KCNA1, KCNA2, KCNA4, KCNA5 and KCNA6 alpha subunit-containing channels. Displays nicotinamide adenine dinucleotide phosphate (NADPH)-dependent aldoketoreductase activity by catalyzing the NADPH-dependent reduction of a variety of endogenous aldehydes and ketones. The binding of NADPH is required for efficient down-regulation of potassium channel activity. Oxidation of the bound NADPH restrains N-terminal domain from blocking the channel, thereby decreasing N-type inactivation of potassium channel activity. This chain is Voltage-gated potassium channel subunit beta-1 (KCNAB1), found in Bos taurus (Bovine).